The following is a 385-amino-acid chain: Fe-S cluster assembly protein DRE2 (385 aa).

The interval Met1–Ile177 is N-terminal SAM-like domain. The interval Asn178–Asn240 is linker. Positions Tyr200–Glu226 are disordered. Positions Ala217–Glu226 are enriched in acidic residues. Residues Cys261, Cys275, Cys278, and Cys280 each coordinate [2Fe-2S] cluster. A fe-S binding site A region spans residues Cys261–Cys280. Residues Cys348, Cys351, Cys359, and Cys362 each contribute to the [4Fe-4S] cluster site. 2 short sequence motifs (cx2C motif) span residues Cys348–Cys351 and Cys359–Cys362. A fe-S binding site B region spans residues Cys348–Cys362.

Belongs to the anamorsin family. As to quaternary structure, monomer. Interacts with TAH18. Interacts with MIA40. The cofactor is [2Fe-2S] cluster. [4Fe-4S] cluster is required as a cofactor.

The protein localises to the cytoplasm. Its subcellular location is the mitochondrion intermembrane space. Component of the cytosolic iron-sulfur (Fe-S) protein assembly (CIA) machinery required for the maturation of extramitochondrial Fe-S proteins. Part of an electron transfer chain functioning in an early step of cytosolic Fe-S biogenesis, facilitating the de novo assembly of a [4Fe-4S] cluster on the scaffold complex CFD1-NBP35. Electrons are transferred to DRE2 from NADPH via the FAD- and FMN-containing protein TAH18. TAH18-DRE2 are also required for the assembly of the diferric tyrosyl radical cofactor of ribonucleotide reductase (RNR), probably by providing electrons for reduction during radical cofactor maturation in the catalytic small subunit RNR2. The protein is Fe-S cluster assembly protein DRE2 of Candida dubliniensis (strain CD36 / ATCC MYA-646 / CBS 7987 / NCPF 3949 / NRRL Y-17841) (Yeast).